The following is a 131-amino-acid chain: MAEPDYIEDDNPELIRPQKLINPVKSSRNHQDLHRELLMNQKRGLAPQNKPELQKVMEKRRRDQVIKQKEEEAQKKKSDLEIELLKRQQKLEQLELEKQKLQEEQENAPEFVKVKGNLRRTGQEVAQAQES.

N-acetylalanine is present on Ala2. The interval 39-79 (MNQKRGLAPQNKPELQKVMEKRRRDQVIKQKEEEAQKKKSD) is disordered. N6-acetyllysine is present on Lys50. Residues 52 to 79 (ELQKVMEKRRRDQVIKQKEEEAQKKKSD) show a composition bias toward basic and acidic residues. Residues 61–112 (RRDQVIKQKEEEAQKKKSDLEIELLKRQQKLEQLELEKQKLQEEQENAPEFV) are a coiled coil.

This sequence belongs to the FAM107 family. In terms of tissue distribution, expressed in the hippocampus and hypothalamus. Expressed in the pontine nuclei and reticulotegmental nucleus. Expressed in Purkinje cell and nuclear layers of the cerebelum. Expressed in the choroid plexus. Expressed in hippocampal granule neurons of the dente gyrus.

In Mus musculus (Mouse), this protein is Protein FAM107B.